A 54-amino-acid polypeptide reads, in one-letter code: Synaptosomal-associated protein 25 (54 aa).

It belongs to the SNAP-25 family. As to quaternary structure, part of the SNARE core complex containing SNAP25, VAMP2 and STX1A; this complex binds CPLX1. Found in a complex containing SYT1, SV2B and syntaxin-1. Found in a ternary complex with STX1A and VAMP8. Interacts with HSC70 and with SYT9, forming a complex with DNAJC5. The interaction with SYT9 is inhibited in presence of calcium. Isoform 1 and isoform 2 interact with BLOC1S6. Interacts with CENPF. Interacts with EQTN. Interacts with HGS. Interacts with KCNB1 (via N-terminus); reduces the voltage-dependent potassium channel KCNB1 activity in pancreatic beta cells. Interacts with OTOF. Interacts with RIMS1. Interacts with SNAPIN. Interacts with STXBP6. Interacts with TRIM9. Interacts with ZDHHC13 (via ANK repeats). Interacts with ZDHHC17 (via ANK repeats). Associates with the BLOC-1 complex. Interacts with PLCL1 (via C2 domain). Interacts with PRRT2; this interaction may impair the formation of the SNARE complex. Interacts with alpha-synuclein/SNCA. Interacts with PRPH2. Interacts with ROM1. Interacts with STX3. The N-terminus is blocked.

The protein resides in the cytoplasm. The protein localises to the perinuclear region. It localises to the cell membrane. It is found in the synapse. Its subcellular location is the synaptosome. The protein resides in the photoreceptor inner segment. Its function is as follows. t-SNARE involved in the molecular regulation of neurotransmitter release. May play an important role in the synaptic function of specific neuronal systems. Associates with proteins involved in vesicle docking and membrane fusion. Regulates plasma membrane recycling through its interaction with CENPF. Modulates the gating characteristics of the delayed rectifier voltage-dependent potassium channel KCNB1 in pancreatic beta cells. The polypeptide is Synaptosomal-associated protein 25 (SNAP25) (Oryctolagus cuniculus (Rabbit)).